The chain runs to 1463 residues: Kinesin-like protein KIF15 (1463 aa).

The Kinesin motor domain occupies alanine 18–isoleucine 354. Glycine 99 to threonine 106 is an ATP binding site. Residues alanine 387–serine 424 form a disordered region. Polar residues predominate over residues serine 398 to valine 414. A compositionally biased stretch (low complexity) spans serine 415–serine 424. Coiled coils occupy residues serine 436–asparagine 517 and threonine 586–lysine 646. 3 disordered regions span residues alanine 686–isoleucine 720, phenylalanine 1335–threonine 1356, and glutamine 1409–alanine 1444. A compositionally biased stretch (polar residues) spans aspartate 701–proline 715. Positions glutamate 1418–glutamine 1428 are enriched in basic and acidic residues.

Belongs to the TRAFAC class myosin-kinesin ATPase superfamily. Kinesin family. KLP2 subfamily. As to quaternary structure, homodimer.

It is found in the cytoplasm. Its subcellular location is the cytoskeleton. The protein resides in the spindle. Plus-end directed kinesin-like motor enzyme involved in mitotic spindle assembly. Plays a role in positioning spindle poles during mitosis, specifically at prometaphase. The sequence is that of Kinesin-like protein KIF15 (KIF15) from Strongylocentrotus purpuratus (Purple sea urchin).